A 159-amino-acid polypeptide reads, in one-letter code: NADH-quinone oxidoreductase subunit B (159 aa).

Positions 36, 37, 102, and 132 each coordinate [4Fe-4S] cluster.

It belongs to the complex I 20 kDa subunit family. As to quaternary structure, NDH-1 is composed of 14 different subunits. Subunits NuoB, C, D, E, F, and G constitute the peripheral sector of the complex. The cofactor is [4Fe-4S] cluster.

Its subcellular location is the cell inner membrane. It carries out the reaction a quinone + NADH + 5 H(+)(in) = a quinol + NAD(+) + 4 H(+)(out). NDH-1 shuttles electrons from NADH, via FMN and iron-sulfur (Fe-S) centers, to quinones in the respiratory chain. Couples the redox reaction to proton translocation (for every two electrons transferred, four hydrogen ions are translocated across the cytoplasmic membrane), and thus conserves the redox energy in a proton gradient. The chain is NADH-quinone oxidoreductase subunit B from Albidiferax ferrireducens (strain ATCC BAA-621 / DSM 15236 / T118) (Rhodoferax ferrireducens).